Here is a 321-residue protein sequence, read N- to C-terminus: Phospholipid phosphatase-related protein type 5 (321 aa).

Transmembrane regions (helical) follow at residues 10 to 30 (SSML…AYYF), 62 to 82 (AVPP…VIIV), 122 to 142 (FLGI…AGQV), 196 to 213 (AALS…ITNT), 225 to 245 (VLCL…VAEY), and 252 to 272 (VIAG…CVVN).

Belongs to the PA-phosphatase related phosphoesterase family. Isoform 1 is expressed in brain, lung, kidney and colon. Isoform 2 is expressed in placenta, skeletal muscle and kidney.

The protein localises to the cell membrane. Its function is as follows. Induces filopodia formation and promotes neurite growth in a CDC42-independent manner; impedes neurite growth inhibitory-mediated axonal retraction. This Homo sapiens (Human) protein is Phospholipid phosphatase-related protein type 5.